The following is a 326-amino-acid chain: Eukaryotic translation initiation factor 3 subunit I (326 aa).

WD repeat units lie at residues 8 to 47 (GHER…RLGT), 50 to 89 (GHQG…VIAS), 145 to 184 (MVES…KVVD), 188 to 227 (DHAA…CLKT), and 285 to 326 (GHFG…NIFE).

The protein belongs to the eIF-3 subunit I family. In terms of assembly, component of the eukaryotic translation initiation factor 3 (eIF-3) complex. The eIF-3 complex interacts with pix.

Its subcellular location is the cytoplasm. Component of the eukaryotic translation initiation factor 3 (eIF-3) complex, which is involved in protein synthesis of a specialized repertoire of mRNAs and, together with other initiation factors, stimulates binding of mRNA and methionyl-tRNAi to the 40S ribosome. The eIF-3 complex specifically targets and initiates translation of a subset of mRNAs involved in cell proliferation. The protein is Eukaryotic translation initiation factor 3 subunit I of Drosophila grimshawi (Hawaiian fruit fly).